Consider the following 319-residue polypeptide: Probable deoxyhypusine synthase (319 aa).

Lys-287 functions as the Nucleophile in the catalytic mechanism.

It belongs to the deoxyhypusine synthase family. Requires NAD(+) as cofactor.

It catalyses the reaction [eIF5A protein]-L-lysine + spermidine = [eIF5A protein]-deoxyhypusine + propane-1,3-diamine. Its pathway is protein modification; eIF5A hypusination. Functionally, catalyzes the NAD-dependent oxidative cleavage of spermidine and the subsequent transfer of the butylamine moiety of spermidine to the epsilon-amino group of a specific lysine residue of the eIF-5A precursor protein to form the intermediate deoxyhypusine residue. The protein is Probable deoxyhypusine synthase of Ignicoccus hospitalis (strain KIN4/I / DSM 18386 / JCM 14125).